The chain runs to 720 residues: Probable ATP-dependent RNA helicase DHX35 (720 aa).

One can recognise a Helicase ATP-binding domain in the interval 64–229; it reads LYLIENYQTV…FNQNETSDPA (166 aa). 77–84 is a binding site for ATP; sequence GETGCGKS. A DEAH box motif is present at residues 176 to 179; sequence DEAH. Residues 261-438 form the Helicase C-terminal domain; the sequence is TVETVVKIHQ…PVILQLKALG (178 aa).

This sequence belongs to the DEAD box helicase family. DEAH subfamily. As to quaternary structure, identified in the spliceosome C complex.

It catalyses the reaction ATP + H2O = ADP + phosphate + H(+). In terms of biological role, may be involved in pre-mRNA splicing. In Pongo abelii (Sumatran orangutan), this protein is Probable ATP-dependent RNA helicase DHX35 (DHX35).